The following is a 383-amino-acid chain: Ovalbumin (383 aa).

G2 is modified (N-acetylglycine). A signal peptide (not cleaved) is located at residues H22–D48. Position 69 is a phosphoserine (S69). A disulfide bond links C74 and C121. N293 and N312 each carry an N-linked (GlcNAc...) asparagine glycan. Phosphoserine is present on S345.

It belongs to the serpin family. Ov-serpin subfamily. Post-translationally, the signal sequence is not cleaved. The functional signal for membrane translocation of ovalbumin becomes accessible when the nascent chain is 50 to 60 residues long. The hydrophobic sequence which lies between residues 27 and 43 folds back on the preceding residues to form an amphipathic hairpin structure which is the signal element recognized by the membrane. In terms of tissue distribution, major protein of egg white.

It localises to the secreted. Its function is as follows. Storage protein of egg white. Lack protease inhibitory activity. This chain is Ovalbumin (SERPINB14), found in Coturnix japonica (Japanese quail).